We begin with the raw amino-acid sequence, 533 residues long: Probable RNA-binding protein 46 (533 aa).

RRM domains lie at 61 to 139, 141 to 223, and 236 to 308; these read CEVF…VSLD, CRLF…WADP, and KVLY…LAKP. The tract at residues 338–362 is disordered; that stretch reads ESHSKSLGKPPTLPTRLNGQHSPSP.

In terms of assembly, interacts with YTHDC2, MEIOC, MOV10, CNOT6L, DDX4, UPF1 and PABPC1. As to expression, expressed in the testis and ovary (at protein level). Expressed in spermatogonia and spermatocytes in testis (at protein level).

It is found in the cytoplasm. Its function is as follows. Essential for male and female fertility, playing a crucial role in regulating germ cell development by ensuring the proper progression of meiosis prophase I. Regulates mitotic-to-meiotic transition in spermatogenesis by forming a complex with MEIOC and YTHDC2 which recognizes and down-regulates mitotic transcripts for a successful meiotic entry. Required for normal synaptonemal complex formation during meiosis, binding meiotic cohesin subunit mRNAs containing GCCUAU/GUUCGA motifs in their 3'UTRs regions and positively regulating their translation. Required for spermatogonial differentiation in both developing and adult testis. The protein is Probable RNA-binding protein 46 of Mus musculus (Mouse).